The sequence spans 154 residues: Transcriptional repressor NrdR (154 aa).

Residues 3-34 fold into a zinc finger; sequence CPFCNHGELKVIDSRNAPESNAIKRRRECLRC. Residues 48 to 138 form the ATP-cone domain; that stretch reads VQVLKRDGRY…VYRRFKDVGE (91 aa).

Belongs to the NrdR family. It depends on Zn(2+) as a cofactor.

Its function is as follows. Negatively regulates transcription of bacterial ribonucleotide reductase nrd genes and operons by binding to NrdR-boxes. The protein is Transcriptional repressor NrdR of Chlamydia trachomatis serovar L2 (strain ATCC VR-902B / DSM 19102 / 434/Bu).